We begin with the raw amino-acid sequence, 598 residues long: DNA polymerase alpha subunit B (598 aa).

A compositionally biased stretch (polar residues) spans 112-140; it reads SYTTPSKGSQKRAISTPETPLTKRSVSTR. The interval 112–167 is disordered; it reads SYTTPSKGSQKRAISTPETPLTKRSVSTRSPHQLLSPSSFSPSATPSQKYNSRSNR. Ser-126 carries the post-translational modification Phosphoserine. Phosphothreonine occurs at positions 127 and 130. Residues Ser-141, Ser-147, Ser-152, and Ser-154 each carry the phosphoserine modification. Residues 141–158 are compositionally biased toward low complexity; it reads SPHQLLSPSSFSPSATPS.

It belongs to the DNA polymerase alpha subunit B family. Component of the alpha DNA polymerase complex (also known as the alpha DNA polymerase-primase complex) consisting of four subunits: the catalytic subunit POLA1, the regulatory subunit POLA2, and primase complex subunits PRIM1 and PRIM2 respectively. Within the complex, POLA1 directly interacts with PRIM2/p58. Post-translationally, phosphorylated in a cell cycle-dependent manner, in G2/M phase.

Its subcellular location is the nucleus. Functionally, accessory subunit of the DNA polymerase alpha complex (also known as the alpha DNA polymerase-primase complex) which plays an essential role in the initiation of DNA synthesis. During the S phase of the cell cycle, the DNA polymerase alpha complex (composed of a catalytic subunit POLA1, an accessory subunit POLA2 and two primase subunits, the catalytic subunit PRIM1 and the regulatory subunit PRIM2) is recruited to DNA at the replicative forks via direct interactions with MCM10 and WDHD1. The primase subunit of the polymerase alpha complex initiates DNA synthesis by oligomerising short RNA primers on both leading and lagging strands. These primers are initially extended by the polymerase alpha catalytic subunit and subsequently transferred to polymerase delta and polymerase epsilon for processive synthesis on the lagging and leading strand, respectively. The sequence is that of DNA polymerase alpha subunit B (POLA2) from Homo sapiens (Human).